Here is a 74-residue protein sequence, read N- to C-terminus: Small ribosomal subunit protein bS18 (74 aa).

It belongs to the bacterial ribosomal protein bS18 family. As to quaternary structure, part of the 30S ribosomal subunit. Forms a tight heterodimer with protein bS6.

Its function is as follows. Binds as a heterodimer with protein bS6 to the central domain of the 16S rRNA, where it helps stabilize the platform of the 30S subunit. The polypeptide is Small ribosomal subunit protein bS18 (Gloeobacter violaceus (strain ATCC 29082 / PCC 7421)).